The following is a 56-amino-acid chain: UPF0434 protein ECH_0194 (56 aa).

The protein belongs to the UPF0434 family.

The protein is UPF0434 protein ECH_0194 of Ehrlichia chaffeensis (strain ATCC CRL-10679 / Arkansas).